We begin with the raw amino-acid sequence, 236 residues long: Small ribosomal subunit protein uS2c (236 aa).

It belongs to the universal ribosomal protein uS2 family.

The protein localises to the plastid. Its subcellular location is the chloroplast. In Daucus carota (Wild carrot), this protein is Small ribosomal subunit protein uS2c (rps2).